A 470-amino-acid chain; its full sequence is Dendritic cell-specific transmembrane protein (470 aa).

Residues 1 to 33 (MRLWTLGTSIFLRLWGTYVFPRSPSWLDFIQHL) lie on the Cytoplasmic side of the membrane. The chain crosses the membrane as a helical span at residues 34–54 (GVCCFVAFLSVSLFSAAFYWI). A topological domain (extracellular) is located at residue Leu55. A helical membrane pass occupies residues 56-76 (PPVALLSSVWMITCVFLCCSK). Residues 77–97 (RARCFILLAVLSCGLREGRNA) are Cytoplasmic-facing. A helical transmembrane segment spans residues 98–118 (LIAAGTGVVIFGHVENIFYNF). At 119 to 209 (RGLLDSMTCN…MVVTTELLTS (91 aa)) the chain is on the extracellular side. A helical membrane pass occupies residues 210 to 230 (VGQKLLALAGLLLILVSTGLF). The Cytoplasmic segment spans residues 231 to 292 (LKRFLGPCGW…LQLTPKEKKT (62 aa)). The helical transmembrane segment at 293-313 (LGLFFLPVLTYLYMWVLFAAV) threads the bilayer. The Extracellular portion of the chain corresponds to 314-376 (DYLLYRLISS…PKPRLSVSET (63 aa)). Residues 377–397 (WVPLSIILLTLIILGLLSSML) traverse the membrane as a helical segment. Residues 398–470 (MQLKILVSVS…QTIPANEDDL (73 aa)) lie on the Cytoplasmic side of the membrane.

Interacts with CREB3. Monomer. Homodimer. Isoform 1 interacts (via the C-terminus cytoplasmic tail) with OS9 isoform 1 (via the C-terminus tail); the interaction induces DCSTAMP redistribution to the endoplasmic reticulum-Golgi intermediate compartment. Isoform 1 interacts (via the C-terminus cytoplasmic tail) with OS9 isoform 2 (via the C-terminus tail). Glycosylated. In terms of tissue distribution, expressed in macrophages and bone marrow dendritic cells (BM-DC). Weakly expressed in the spleen and lymph node. Highly expressed in multi-nuclear osteoclasts compared to mono-nuclear macrophages. Expressed in foreign body giant cells (FBGCs). Isoform 1 and isoform 2 are expressed in osteoclasts.

The protein resides in the cell membrane. It is found in the endoplasmic reticulum membrane. Its subcellular location is the endoplasmic reticulum-Golgi intermediate compartment membrane. The protein localises to the endosome. Its function is as follows. Probable cell surface receptor that plays several roles in cellular fusion, cell differentiation, bone and immune homeostasis. Plays a role in TNFSF11-mediated osteoclastogenesis. Cooperates with OCSTAMP in modulating cell-cell fusion in both osteoclasts and foreign body giant cells (FBGCs). Participates in osteoclast bone resorption. Involved in inducing the expression of tartrate-resistant acid phosphatase in osteoclast precursors. Plays a role in haematopoietic stem cell differentiation of bone marrow cells toward the myeloid lineage. Inhibits the development of neutrophilic granulocytes. Plays also a role in the regulation of dendritic cell (DC) antigen presentation activity by controlling phagocytic activity. Involved in the maintenance of immune self-tolerance and avoidance of autoimmune reactions. The protein is Dendritic cell-specific transmembrane protein (Dcstamp) of Mus musculus (Mouse).